Consider the following 134-residue polypeptide: UPF0412 protein YaaI (134 aa).

An N-terminal signal peptide occupies residues 1–23; that stretch reads MKSVFTISASLAISLMLCCTAQA.

The protein belongs to the UPF0412 family.

The chain is UPF0412 protein YaaI from Escherichia coli O157:H7.